Consider the following 213-residue polypeptide: Proteasome subunit beta 1 (213 aa).

The propeptide at 1–18 is removed in mature form; by autocatalysis; sequence MVFIAVFNGVFAMSSLPG. Threonine 19 (nucleophile) is an active-site residue.

The protein belongs to the peptidase T1B family. As to quaternary structure, the 20S proteasome core is composed of 14 alpha and 14 beta subunits that assemble into four stacked heptameric rings, resulting in a barrel-shaped structure. The two inner rings, each composed of seven catalytic beta subunits, are sandwiched by two outer rings, each composed of seven alpha subunits. The catalytic chamber with the active sites is on the inside of the barrel. Has a gated structure, the ends of the cylinder being occluded by the N-termini of the alpha-subunits. Is capped at one or both ends by the proteasome regulatory ATPase, PAN.

The protein localises to the cytoplasm. It carries out the reaction Cleavage of peptide bonds with very broad specificity.. The formation of the proteasomal ATPase PAN-20S proteasome complex, via the docking of the C-termini of PAN into the intersubunit pockets in the alpha-rings, triggers opening of the gate for substrate entry. Interconversion between the open-gate and close-gate conformations leads to a dynamic regulation of the 20S proteasome proteolysis activity. Component of the proteasome core, a large protease complex with broad specificity involved in protein degradation. In Staphylothermus marinus (strain ATCC 43588 / DSM 3639 / JCM 9404 / F1), this protein is Proteasome subunit beta 1.